Consider the following 157-residue polypeptide: Protein FAM218A (157 aa).

The tract at residues 104-127 (PAVTPPKLPGHSKSEGPPGKVRKR) is disordered.

This is Protein FAM218A (FAM218A) from Homo sapiens (Human).